Reading from the N-terminus, the 834-residue chain is Mannosyl-oligosaccharide glucosidase (834 aa).

The span at 1 to 10 (MARGERRRRA) shows a compositional bias: basic residues. Residues 1-37 (MARGERRRRAAAAEGARPLERARAAGRRDGRAGGARG) are disordered. Topologically, residues 1–43 (MARGERRRRAAAAEGARPLERARAAGRRDGRAGGARGSASGAA) are cytoplasmic. The short motif at 3 to 9 (RGERRRR) is the Endoplasmic reticulum targeting element. The span at 17 to 31 (RPLERARAAGRRDGR) shows a compositional bias: basic and acidic residues. The chain crosses the membrane as a helical; Signal-anchor for type II membrane protein span at residues 44–64 (LAVVVLALAFGLSGRWVLAWL). The Lumenal portion of the chain corresponds to 65 to 834 (RVRRALTLHP…LVLLIMAEEY (770 aa)). A required for endoplasmic reticulum targeting region spans residues 74–136 (PAPSALPPDS…GTPPKLRHTC (63 aa)). Aspartate 580 (proton donor) is an active-site residue. Residue asparagine 654 is glycosylated (N-linked (GlcNAc...) asparagine). Catalysis depends on glutamate 804, which acts as the Proton acceptor.

This sequence belongs to the glycosyl hydrolase 63 family.

It is found in the endoplasmic reticulum membrane. The enzyme catalyses N(4)-(alpha-D-Glc-(1-&gt;2)-alpha-D-Glc-(1-&gt;3)-alpha-D-Glc-(1-&gt;3)-alpha-D-Man-(1-&gt;2)-alpha-D-Man-(1-&gt;2)-alpha-D-Man-(1-&gt;3)-[alpha-D-Man-(1-&gt;2)-alpha-D-Man-(1-&gt;3)-[alpha-D-Man-(1-&gt;2)-alpha-D-Man-(1-&gt;6)]-alpha-D-Man-(1-&gt;6)]-beta-D-Man-(1-&gt;4)-beta-D-GlcNAc-(1-&gt;4)-beta-D-GlcNAc)-L-asparaginyl-[protein] + H2O = N(4)-(alpha-D-Glc-(1-&gt;3)-alpha-D-Glc-(1-&gt;3)-alpha-D-Man-(1-&gt;2)-alpha-D-Man-(1-&gt;2)-alpha-D-Man-(1-&gt;3)-[alpha-D-Man-(1-&gt;2)-alpha-D-Man-(1-&gt;3)-[alpha-D-Man-(1-&gt;2)-alpha-D-Man-(1-&gt;6)]-alpha-D-Man-(1-&gt;6)]-beta-D-Man-(1-&gt;4)-beta-D-GlcNAc-(1-&gt;4)-beta-D-GlcNAc)-L-asparaginyl-[protein] + beta-D-glucose. Its pathway is glycan metabolism; N-glycan degradation. Its activity is regulated as follows. Inhibited by the deoxynojirimycin derivative N-9'-Methoxynonyl-1-Deoxynojirimycin. In terms of biological role, in the context of N-glycan degradation, cleaves the distal alpha 1,2-linked glucose residue from the Glc(3)Man(9)GlcNAc(2) oligosaccharide precursor in a highly specific manner. Its function is as follows. (Microbial infection) Required for successful influenza or dengue virus infection; inhibition of its activity by a deoxynojirimycin derivative prevents death in mice infected with lethal doses of influenza or dengue viruses, even when administrated after infection. This chain is Mannosyl-oligosaccharide glucosidase, found in Mus musculus (Mouse).